The primary structure comprises 994 residues: UPF0182 protein Strop_3729 (994 aa).

A run of 7 helical transmembrane segments spans residues 18-38 (IGVL…VQAW), 61-81 (LLLF…NLWL), 110-130 (IGLW…LSAQ), 174-194 (FTAV…FGGI), 209-229 (AHLS…YVLD), 260-280 (ILAY…NAWM), and 283-303 (LVWP…IGGI). Disordered regions lie at residues 891 to 934 (GEQA…AEAA) and 970 to 994 (FEQA…SPGG). Pro residues predominate over residues 897–926 (PSPPPSDDETPPSPTPTPTPTTPSVTPPPL).

Belongs to the UPF0182 family.

Its subcellular location is the cell membrane. The polypeptide is UPF0182 protein Strop_3729 (Salinispora tropica (strain ATCC BAA-916 / DSM 44818 / JCM 13857 / NBRC 105044 / CNB-440)).